A 163-amino-acid polypeptide reads, in one-letter code: CDP-archaeol synthase (163 aa).

5 helical membrane passes run 4–24 (LLLG…APFI), 52–72 (LLLS…FLGI), 75–95 (IIIG…GAFI), 107–127 (APIL…ISFN), and 128–148 (VNLN…LHMF).

It belongs to the CDP-archaeol synthase family. Mg(2+) serves as cofactor.

The protein resides in the cell membrane. The catalysed reaction is 2,3-bis-O-(geranylgeranyl)-sn-glycerol 1-phosphate + CTP + H(+) = CDP-2,3-bis-O-(geranylgeranyl)-sn-glycerol + diphosphate. The protein operates within membrane lipid metabolism; glycerophospholipid metabolism. Catalyzes the formation of CDP-2,3-bis-(O-geranylgeranyl)-sn-glycerol (CDP-archaeol) from 2,3-bis-(O-geranylgeranyl)-sn-glycerol 1-phosphate (DGGGP) and CTP. This reaction is the third ether-bond-formation step in the biosynthesis of archaeal membrane lipids. This Sulfolobus acidocaldarius (strain ATCC 33909 / DSM 639 / JCM 8929 / NBRC 15157 / NCIMB 11770) protein is CDP-archaeol synthase.